The primary structure comprises 100 residues: Urease subunit gamma (100 aa).

It belongs to the urease gamma subunit family. Heterotrimer of UreA (gamma), UreB (beta) and UreC (alpha) subunits. Three heterotrimers associate to form the active enzyme.

It is found in the cytoplasm. The catalysed reaction is urea + 2 H2O + H(+) = hydrogencarbonate + 2 NH4(+). It participates in nitrogen metabolism; urea degradation; CO(2) and NH(3) from urea (urease route): step 1/1. This Haemophilus influenzae (strain 86-028NP) protein is Urease subunit gamma.